The chain runs to 1394 residues: Adhesion and penetration protein autotransporter (1394 aa).

An N-terminal signal peptide occupies residues 1 to 25 (MKKTVFRLNFLTACISLGIVSQAWA). Residues 26–286 (GHTYFGIDYQ…QLVRKSYFDE (261 aa)) enclose the Peptidase S6 domain. The active site involves serine 243. Disordered regions lie at residues 848-870 (AYSA…TPTS) and 995-1027 (TLEA…FPDT). The region spanning 1140–1394 (VDQAQSAVWT…NVGVKLGYRW (255 aa)) is the Autotransporter domain.

It is found in the periplasm. It localises to the secreted. The protein resides in the cell surface. Its subcellular location is the cell outer membrane. Its function is as follows. Probable protease; promotes adherence and invasion by directly binding to a host cell structure. The polypeptide is Adhesion and penetration protein autotransporter (hap) (Haemophilus influenzae).